Consider the following 319-residue polypeptide: Glutathione synthetase (319 aa).

One can recognise an ATP-grasp domain in the interval 125-311; the sequence is EKLFATLFPQ…IGGLLMDAIE (187 aa). 151–208 provides a ligand contact to ATP; that stretch reads FAEQQGDVILKPLDGMGGASIFRHRAGDPNLSVILETLTAHGTQQIMAQGYLPAIKDG. Mg(2+) is bound by residues E282 and N284.

The protein belongs to the prokaryotic GSH synthase family. Requires Mg(2+) as cofactor. Mn(2+) is required as a cofactor.

It carries out the reaction gamma-L-glutamyl-L-cysteine + glycine + ATP = glutathione + ADP + phosphate + H(+). It functions in the pathway sulfur metabolism; glutathione biosynthesis; glutathione from L-cysteine and L-glutamate: step 2/2. The sequence is that of Glutathione synthetase from Pseudomonas syringae pv. tomato (strain ATCC BAA-871 / DC3000).